The primary structure comprises 88 residues: Small ribosomal subunit protein uS17 (88 aa).

The protein belongs to the universal ribosomal protein uS17 family. Part of the 30S ribosomal subunit.

In terms of biological role, one of the primary rRNA binding proteins, it binds specifically to the 5'-end of 16S ribosomal RNA. The chain is Small ribosomal subunit protein uS17 from Prochlorococcus marinus (strain NATL1A).